We begin with the raw amino-acid sequence, 377 residues long: Spermidine/putrescine import ATP-binding protein PotA (377 aa).

Residues 18–248 (IRLSGISKSF…PKNLFVARFI (231 aa)) enclose the ABC transporter domain. 50 to 57 (GPSGCGKT) provides a ligand contact to ATP.

This sequence belongs to the ABC transporter superfamily. Spermidine/putrescine importer (TC 3.A.1.11.1) family. The complex is composed of two ATP-binding proteins (PotA), two transmembrane proteins (PotB and PotC) and a solute-binding protein (PotD).

Its subcellular location is the cell inner membrane. It carries out the reaction ATP + H2O + polyamine-[polyamine-binding protein]Side 1 = ADP + phosphate + polyamineSide 2 + [polyamine-binding protein]Side 1.. Part of the ABC transporter complex PotABCD involved in spermidine/putrescine import. Responsible for energy coupling to the transport system. The polypeptide is Spermidine/putrescine import ATP-binding protein PotA (Vibrio parahaemolyticus serotype O3:K6 (strain RIMD 2210633)).